We begin with the raw amino-acid sequence, 416 residues long: Creatine kinase U-type, mitochondrial (416 aa).

A mitochondrion-targeting transit peptide spans 1–39; the sequence is MAGPFSRLLSARPGLRLLALAGAGSLAAGFLLRSEPVRA. The interval 40-64 is cardiolipin-binding; that stretch reads ASERRRLYPPSAEYPDLRKHNNCMA. A Phosphagen kinase N-terminal domain is found at 45 to 131; that stretch reads RLYPPSAEYP…FDPVIQERHN (87 aa). Serine 151 is subject to Phosphoserine. Residues 158 to 400 form the Phosphagen kinase C-terminal domain; sequence YVLSSRVRTG…NFLIDCERRL (243 aa). ATP is bound at residue 161–165; sequence SSRVR. Serine 196 bears the Phosphoserine mark. Residue threonine 213 is modified to Phosphothreonine. ATP is bound at residue histidine 224. A Phosphoserine modification is found at serine 232. ATP-binding positions include arginine 269, arginine 325, and 353-358; that span reads RGTGGV. Threonine 355 is subject to Phosphothreonine. Serine 365 is modified (phosphoserine). An ATP-binding site is contributed by aspartate 368.

This sequence belongs to the ATP:guanido phosphotransferase family. In terms of assembly, exists as an octamer composed of four MTCK homodimers.

The protein resides in the mitochondrion inner membrane. It catalyses the reaction creatine + ATP = N-phosphocreatine + ADP + H(+). Its function is as follows. Reversibly catalyzes the transfer of phosphate between ATP and various phosphogens (e.g. creatine phosphate). Creatine kinase isoenzymes play a central role in energy transduction in tissues with large, fluctuating energy demands, such as skeletal muscle, heart, brain and spermatozoa. The polypeptide is Creatine kinase U-type, mitochondrial (CKMT1) (Bos taurus (Bovine)).